A 165-amino-acid polypeptide reads, in one-letter code: Secreted acidic protein 2 (165 aa).

2 stretches are compositionally biased toward acidic residues: residues 1 to 58 (WSXS…DDSG) and 80 to 102 (ESSDDDNERDDTSDDSVGDDAYN). The disordered stretch occupies residues 1 to 112 (WSXSGDDDDD…DDSQAGELNS (112 aa)). A compositionally biased stretch (polar residues) spans 103–112 (DDSQAGELNS).

In terms of tissue distribution, component of the acid-insoluble and acid-soluble organic matrix of the aragonitic skeleton (at protein level).

Its subcellular location is the secreted. In Acropora millepora (Staghorn coral), this protein is Secreted acidic protein 2.